Consider the following 126-residue polypeptide: Holo-[acyl-carrier-protein] synthase (126 aa).

Positions 8 and 57 each coordinate Mg(2+).

The protein belongs to the P-Pant transferase superfamily. AcpS family. Mg(2+) is required as a cofactor.

Its subcellular location is the cytoplasm. It carries out the reaction apo-[ACP] + CoA = holo-[ACP] + adenosine 3',5'-bisphosphate + H(+). Transfers the 4'-phosphopantetheine moiety from coenzyme A to a Ser of acyl-carrier-protein. This Leptospira interrogans serogroup Icterohaemorrhagiae serovar copenhageni (strain Fiocruz L1-130) protein is Holo-[acyl-carrier-protein] synthase.